The chain runs to 328 residues: dTDP-3,4-didehydro-2,6-dideoxy-alpha-D-glucose 3-reductase (328 aa).

Arginine 20 provides a ligand contact to substrate. Residues 38 to 39 (SR), leucine 75, and histidine 80 each bind NADP(+). Residue lysine 98 is the Proton donor of the active site. NADP(+) contacts are provided by arginine 166 and aspartate 178. Substrate contacts are provided by tyrosine 236 and threonine 256.

The protein belongs to the Gfo/Idh/MocA family.

The catalysed reaction is dTDP-4-dehydro-2,6-dideoxy-alpha-D-glucose + NADP(+) = dTDP-3,4-didehydro-2,6-dideoxy-alpha-D-glucose + NADPH + H(+). The protein operates within antibiotic biosynthesis. Functionally, involved in the biosynthesis of one of the two 2,6-deoxysugars, dTDP-L-oleandrose, attached to the macrolactone ring oleandolide to produce the aglycone antibiotic oleandomycin. Catalyzes the reduction of the C-3 keto moiety of dTDP-3,4-diketo-2,6-dideoxy-alpha-D-glucose to yield dTDP-4-keto-2,6-dideoxy-alpha-D-glucose. NADPH is the better reductant, however NADH can also be used. This is dTDP-3,4-didehydro-2,6-dideoxy-alpha-D-glucose 3-reductase from Streptomyces antibioticus.